The following is a 506-amino-acid chain: Histidine--tRNA ligase, mitochondrial (506 aa).

The transit peptide at 1-33 (MHLLGLLPRRAWASLLSQLLRPPWASCTGAVRC) directs the protein to the mitochondrion. At serine 67 the chain carries Phosphoserine. L-histidine contacts are provided by residues 131-133 (DLT), arginine 158, glutamine 174, aspartate 178, arginine 327, and 331-332 (YY). The residue at position 444 (lysine 444) is an N6-acetyllysine.

It belongs to the class-II aminoacyl-tRNA synthetase family. Homodimer.

The protein localises to the mitochondrion. The catalysed reaction is tRNA(His) + L-histidine + ATP = L-histidyl-tRNA(His) + AMP + diphosphate + H(+). Mitochondrial aminoacyl-tRNA synthetase that catalyzes the ATP-dependent ligation of histidine to the 3'-end of its cognate tRNA, via the formation of an aminoacyl-adenylate intermediate (His-AMP). In Pongo abelii (Sumatran orangutan), this protein is Histidine--tRNA ligase, mitochondrial (HARS2).